We begin with the raw amino-acid sequence, 329 residues long: Solute carrier family 35 member B1 (329 aa).

The next 8 membrane-spanning stretches (helical) occupy residues 21–41 (AVCF…QETI), 60–80 (TLVF…IQFF), 91–111 (WLYG…NSAL), 142–162 (YPMA…LFLY), 175–195 (VFGF…LTGV), 220–240 (TLVL…LAFT), 250–270 (ILLF…TVVY), and 292–312 (VLLF…LVFL). A Di-lysine motif motif is present at residues 325–329 (KKTTH).

The protein belongs to the nucleotide-sugar transporter family. SLC35B subfamily.

The protein resides in the endoplasmic reticulum membrane. Its function is as follows. Probable sugar transporter. The sequence is that of Solute carrier family 35 member B1 (slc35b1) from Danio rerio (Zebrafish).